The following is a 172-amino-acid chain: Large ribosomal subunit protein uL10 (172 aa).

This sequence belongs to the universal ribosomal protein uL10 family. Part of the ribosomal stalk of the 50S ribosomal subunit. The N-terminus interacts with L11 and the large rRNA to form the base of the stalk. The C-terminus forms an elongated spine to which L12 dimers bind in a sequential fashion forming a multimeric L10(L12)X complex.

Functionally, forms part of the ribosomal stalk, playing a central role in the interaction of the ribosome with GTP-bound translation factors. The chain is Large ribosomal subunit protein uL10 from Chelativorans sp. (strain BNC1).